The following is a 122-amino-acid chain: MKAERPDGRKLRALKRGHLAEYRAALCLIVKGYRIVAMRYRTKLGEIDIIARRGDLIACVEVKARASFDGAVFAVSDTAQRRIRAASDVWLSRQADFHCLSVRYDIVAVMPWRWPRHLPDAF.

The protein belongs to the UPF0102 family.

In Sinorhizobium fredii (strain NBRC 101917 / NGR234), this protein is UPF0102 protein NGR_c36770.